Consider the following 156-residue polypeptide: MIQSQINRNIRLDLADAILLSKAKKDLSFAEIADGTGLAEAFVTAALLGQQALPADAARLVGAKLDLDEDAILLLQMIPLRGCIDDRIPTDPTMHRFYEMLQVYGTTLKALVHEKFGDGIISAINFKLDVKKVADPEGGERAVITLDGKYLPTKPF.

Active-site residues include R96, E99, and S122.

It belongs to the cyanase family.

It catalyses the reaction cyanate + hydrogencarbonate + 3 H(+) = NH4(+) + 2 CO2. Functionally, catalyzes the reaction of cyanate with bicarbonate to produce ammonia and carbon dioxide. The polypeptide is Cyanate hydratase (Escherichia coli O9:H4 (strain HS)).